Reading from the N-terminus, the 428-residue chain is Somatostatin receptor type 3 (428 aa).

The Extracellular portion of the chain corresponds to 1–45; it reads MAAVTYPSSVPTTLDPGNASSAWPLDTSLGNASAGTSLAGLAVSG. 2 N-linked (GlcNAc...) asparagine glycosylation sites follow: Asn18 and Asn31. Residues 46 to 71 form a helical membrane-spanning segment; that stretch reads ILISLVYLVVCVVGLLGNSLVIYVVL. The Cytoplasmic portion of the chain corresponds to 72-81; sequence RHTSSPSVTS. The chain crosses the membrane as a helical span at residues 82-103; that stretch reads VYILNLALADELFMLGLPFLAA. Over 104–118 the chain is Extracellular; the sequence is QNALSYWPFGSLMCR. Residues Cys117 and Cys192 are joined by a disulfide bond. A helical transmembrane segment spans residues 119-140; sequence LVMAVDGINQFTSIFCLTVMSV. Residues 141–162 are Cytoplasmic-facing; the sequence is DRYLAVVHPTRSARWRTAPVAR. The chain crosses the membrane as a helical span at residues 163 to 182; sequence MVSAAVWVASAVVVLPVVVF. At 183–206 the chain is on the extracellular side; the sequence is SGVPRGMSTCHMQWPEPAAAWRTA. Residues 207–232 form a helical membrane-spanning segment; the sequence is FIIYTAALGFFGPLLVICLCYLLIVV. Residues 233-266 are Cytoplasmic-facing; the sequence is KVRSTTRRVRAPSCQWVQAPACQRRRRSERRVTR. Residues 267–288 form a helical membrane-spanning segment; it reads MVVAVVALFVLCWMPFYLLNIV. Over 289–302 the chain is Extracellular; it reads NVVCPLPEEPAFFG. A helical transmembrane segment spans residues 303-325; the sequence is LYFLVVALPYANSCANPILYGFL. The Cytoplasmic portion of the chain corresponds to 326 to 428; it reads SYRFKQGFRR…GDKASTLSHL (103 aa). Phosphoserine is present on residues Ser341, Ser346, and Ser351. Residues 343 to 428 are disordered; the sequence is RVRSQEPGSG…GDKASTLSHL (86 aa). At Thr357 the chain carries Phosphothreonine. Positions 357-370 are enriched in acidic residues; sequence TEEEEDEEEEERRE. Positions 385–412 are enriched in polar residues; it reads RLSQIAQPGPSGQQQRPCTGTAKEQQLL.

This sequence belongs to the G-protein coupled receptor 1 family. Homodimer and heterodimer with SSTR2. Heterodimerization with SSTR2 inactivates SSTR3 receptor function. Post-translationally, phosphorylated. Phosphorylation increases upon somatostatin binding. In terms of tissue distribution, densely expressed in cerebellum and at moderate levels in the amygdala, cortex, striatum, spleen, liver and pituitary.

Its subcellular location is the cell membrane. Receptor for somatostatin-14 and -28. This receptor is coupled via pertussis toxin sensitive G proteins to inhibition of adenylyl cyclase. This Rattus norvegicus (Rat) protein is Somatostatin receptor type 3 (Sstr3).